Reading from the N-terminus, the 354-residue chain is Uroporphyrinogen decarboxylase (354 aa).

Residues 27-31, D77, Y154, T209, and H327 contribute to the substrate site; that span reads RQAGR.

This sequence belongs to the uroporphyrinogen decarboxylase family. Homodimer.

The protein localises to the cytoplasm. The enzyme catalyses uroporphyrinogen III + 4 H(+) = coproporphyrinogen III + 4 CO2. It functions in the pathway porphyrin-containing compound metabolism; protoporphyrin-IX biosynthesis; coproporphyrinogen-III from 5-aminolevulinate: step 4/4. Catalyzes the decarboxylation of four acetate groups of uroporphyrinogen-III to yield coproporphyrinogen-III. In Edwardsiella ictaluri (strain 93-146), this protein is Uroporphyrinogen decarboxylase.